The sequence spans 128 residues: Ig kappa chain V-V region T1 (128 aa).

Residues 1–20 form the signal peptide; it reads MRTPAQFLGILLLWFPGIKC. The tract at residues 21–43 is framework-1; that stretch reads DIKMTQSPSSMYASLGERVTISC. Residues C43 and C108 are joined by a disulfide bond. The tract at residues 44 to 54 is complementarity-determining-1; it reads KASQDINSYLT. Residues 55–69 form a framework-2 region; sequence WFQQKPGKSPKTLLY. The complementarity-determining-2 stretch occupies residues 70–76; that stretch reads RANRLVD. Residues 77–108 form a framework-3 region; that stretch reads GVPSRFSGSGSGQDFSLTISSLEYEDMGIYYC. The interval 109–117 is complementarity-determining-3; the sequence is LQYDEFPLT. Residues 118–127 form a framework-4 region; sequence FGAGTKLELK.

The sequence is that of Ig kappa chain V-V region T1 from Mus musculus (Mouse).